Reading from the N-terminus, the 419-residue chain is UDP-N-acetylglucosamine 1-carboxyvinyltransferase (419 aa).

22–23 (KN) contributes to the phosphoenolpyruvate binding site. A UDP-N-acetyl-alpha-D-glucosamine-binding site is contributed by Arg-93. Cys-117 (proton donor) is an active-site residue. A 2-(S-cysteinyl)pyruvic acid O-phosphothioketal modification is found at Cys-117. UDP-N-acetyl-alpha-D-glucosamine contacts are provided by residues 122–126 (RPVDL), Asp-308, and Ile-330.

It belongs to the EPSP synthase family. MurA subfamily.

It localises to the cytoplasm. The enzyme catalyses phosphoenolpyruvate + UDP-N-acetyl-alpha-D-glucosamine = UDP-N-acetyl-3-O-(1-carboxyvinyl)-alpha-D-glucosamine + phosphate. The protein operates within cell wall biogenesis; peptidoglycan biosynthesis. In terms of biological role, cell wall formation. Adds enolpyruvyl to UDP-N-acetylglucosamine. The polypeptide is UDP-N-acetylglucosamine 1-carboxyvinyltransferase (Pseudomonas putida (Arthrobacter siderocapsulatus)).